Reading from the N-terminus, the 339-residue chain is Dihydroorotate dehydrogenase (quinone) (339 aa).

FMN contacts are provided by residues 62 to 66 and Thr86; that span reads AGMDK. Lys66 is a binding site for substrate. Residue 111-115 coordinates substrate; the sequence is NRMGF. Positions 139 and 172 each coordinate FMN. Residue Asn172 participates in substrate binding. Catalysis depends on Ser175, which acts as the Nucleophile. Asn177 serves as a coordination point for substrate. The FMN site is built by Lys217 and Thr245. 246 to 247 is a binding site for substrate; it reads NT. Residues Gly268, Gly297, and 318-319 contribute to the FMN site; that span reads YS.

It belongs to the dihydroorotate dehydrogenase family. Type 2 subfamily. As to quaternary structure, monomer. FMN serves as cofactor.

The protein localises to the cell membrane. The enzyme catalyses (S)-dihydroorotate + a quinone = orotate + a quinol. It participates in pyrimidine metabolism; UMP biosynthesis via de novo pathway; orotate from (S)-dihydroorotate (quinone route): step 1/1. Its function is as follows. Catalyzes the conversion of dihydroorotate to orotate with quinone as electron acceptor. The chain is Dihydroorotate dehydrogenase (quinone) from Shewanella baltica (strain OS223).